The sequence spans 170 residues: CFA/I fimbrial subunit B (170 aa).

The first 23 residues, 1–23 (MKFKKTIGAMALTTMFVAVSASA), serve as a signal peptide directing secretion.

It belongs to the fimbrial CS1 protein family. CFA/I fimbriae are rather rigid, thread-like filaments of 0.5-1 micrometer, with an apparent axial hole, and a diameter of 7 nanometers. A single CFA/I fimbria consists of about 100 identical protein subunits.

It is found in the fimbrium. Fimbriae (also called pili), polar filaments radiating from the surface of the bacterium to a length of 0.5-1.5 micrometers and numbering 100-300 per cell, enable bacteria to colonize the epithelium of specific host organs. This is CFA/I fimbrial subunit B (cfaB) from Escherichia coli.